A 430-amino-acid polypeptide reads, in one-letter code: Sphingosine-1-phosphate phosphatase 1 (430 aa).

Residues 34-103 (SSPAADEDAE…AGSQRRNSLT (70 aa)) form a disordered region. Ser-101 carries the phosphoserine modification. At Thr-103 the chain carries Phosphothreonine. The next 4 membrane-spanning stretches (helical) occupy residues 121–141 (FCLGTELGNELFYILFFPFWI), 152–172 (LVIIWVLVMYLGQCTKDIIRW), 193–213 (MPSTHAMSGTAIPIAMFLLTY), and 216–236 (WQYPLIYGLILIPCWSSLVCL). The segment at 167–175 (KDIIRWPRP) is phosphatase sequence motif I. Residues 194–197 (PSTH) are phosphatase sequence motif II. The active-site Proton donor is the His-197. A phosphatase sequence motif III region spans residues 237–248 (SRIYMGMHSILD). Catalysis depends on His-244, which acts as the Nucleophile. Transmembrane regions (helical) follow at residues 246–266 (ILDVIAGFLYTILILIIFYPL), 279–299 (YAPLIIIGLHLILGIFSFTLD), 311–331 (ILGSGAGIACGSHAAYTLGLS), 348–368 (VTLFGKAILRIVLGMLLVLFV), and 409–429 (YGMVGFSITFLVPYVFSFIGI).

It belongs to the type 2 lipid phosphate phosphatase family. As to expression, highly expressed in liver and kidney. Expressed in epidermis, in the stratum granulosum and the stratum spinosum.

The protein resides in the endoplasmic reticulum membrane. It is found in the cell membrane. It carries out the reaction sphinganine 1-phosphate + H2O = sphinganine + phosphate. The enzyme catalyses sphing-4-enine 1-phosphate + H2O = sphing-4-enine + phosphate. Inhibited by NaF, sodium orthovanadate, propanolol, and N-ethylmaleimide. Its function is as follows. Specifically dephosphorylates sphingosine 1-phosphate (S1P), dihydro-S1P, and phyto-S1P. Does not act on ceramide 1-phosphate, lysophosphatidic acid or phosphatidic acid. Sphingosine-1-phosphate phosphatase activity is needed for efficient recycling of sphingosine into the sphingolipid synthesis pathway. Regulates the intracellular levels of the bioactive sphingolipid metabolite S1P that regulates diverse biological processes acting both as an extracellular receptor ligand or as an intracellular second messenger. Involved in efficient ceramide synthesis from exogenous sphingoid bases. Converts S1P to sphingosine, which is readily metabolized to ceramide via ceramide synthase. In concert with sphingosine kinase 2 (SphK2), recycles sphingosine into ceramide through a phosphorylation/dephosphorylation cycle. Regulates endoplasmic-to-Golgi trafficking of ceramides, resulting in the regulation of ceramide levels in the endoplasmic reticulum, preferentially long-chain ceramide species, and influences the anterograde membrane transport of both ceramide and proteins from the endoplasmic reticulum to the Golgi apparatus. The modulation of intracellular ceramide levels in turn regulates apoptosis. Via S1P levels, modulates resting tone, intracellular Ca(2+) and myogenic vasoconstriction in resistance arteries. Also involved in unfolded protein response (UPR) and ER stress-induced autophagy via regulation of intracellular S1P levels. Involved in the regulation of epidermal homeostasis and keratinocyte differentiation. In Mus musculus (Mouse), this protein is Sphingosine-1-phosphate phosphatase 1.